We begin with the raw amino-acid sequence, 1137 residues long: AP-4 complex subunit epsilon-1 (1137 aa).

2 positions are modified to phosphoserine: Ser-700 and Ser-857. An interaction with TEPSIN region spans residues 727–1137 (SGALPVPQES…YQCQKVMEGS (411 aa)).

This sequence belongs to the adaptor complexes large subunit family. In terms of assembly, adaptor protein complex 4 (AP-4) is a heterotetramer composed of two large adaptins (epsilon-type subunit AP4E1 and beta-type subunit AP4B1), a medium adaptin (mu-type subunit AP4M1) and a small adaptin (sigma-type AP4S1). Interacts with TEPSIN. Interacts with GRIA2; probably indirect it mediates the somatodendritic localization of GRIA2 in neurons. In terms of tissue distribution, widely expressed.

Its subcellular location is the golgi apparatus. It localises to the trans-Golgi network membrane. Its function is as follows. Component of the adaptor protein complex 4 (AP-4). Adaptor protein complexes are vesicle coat components involved both in vesicle formation and cargo selection. They control the vesicular transport of proteins in different trafficking pathways. AP-4 forms a non clathrin-associated coat on vesicles departing the trans-Golgi network (TGN) and may be involved in the targeting of proteins from the trans-Golgi network (TGN) to the endosomal-lysosomal system. It is also involved in protein sorting to the basolateral membrane in epithelial cells and the proper asymmetric localization of somatodendritic proteins in neurons. AP-4 is involved in the recognition and binding of tyrosine-based sorting signals found in the cytoplasmic part of cargos, but may also recognize other types of sorting signal. This chain is AP-4 complex subunit epsilon-1, found in Homo sapiens (Human).